The following is a 405-amino-acid chain: Teichoic acid D-alanyltransferase (405 aa).

The Extracellular segment spans residues Met1–Asn9. The chain crosses the membrane as a helical span at residues Pro10 to Lys29. Residues Gly30 to Met33 lie on the Cytoplasmic side of the membrane. The chain crosses the membrane as a helical span at residues His34 to Phe49. Topologically, residues Asp50 to Lys53 are extracellular. Residues Trp54–Arg80 form a helical membrane-spanning segment. Residues Glu81–Ser86 are Cytoplasmic-facing. Residues Thr87–Gln111 traverse the membrane as a helical segment. Residues His112–Gly121 lie on the Extracellular side of the membrane. A helical transmembrane segment spans residues Ile122–Asp138. Over Gly139–Asn145 the chain is Cytoplasmic. An intramembrane segment occupies Met146–Asp175. Residues Arg176–Asp179 are Cytoplasmic-facing. A helical membrane pass occupies residues Pro180–Ser223. Residues Arg224–Ser232 are Extracellular-facing. Residues Trp233 to Met264 form a helical membrane-spanning segment. Topologically, residues Gly265–Lys274 are cytoplasmic. Residues Pro275–His310 lie within the membrane without spanning it. Residues Lys311–Ser315 are Cytoplasmic-facing. A helical transmembrane segment spans residues Arg316–His335. His335 is a catalytic residue. At Gly336–Thr338 the chain is on the extracellular side. The chain crosses the membrane as a helical span at residues Trp339 to Asn372. The Cytoplasmic portion of the chain corresponds to Arg373–Pro378. A helical transmembrane segment spans residues Ser379–Leu399. The Extracellular segment spans residues Asp400 to His405.

Belongs to the membrane-bound acyltransferase family.

It is found in the cell membrane. Its pathway is cell wall biogenesis; lipoteichoic acid biosynthesis. Functionally, O-acyltransferase that catalyzes D-alanylation of both teichoic acid and lipoteichoic acid (LTA). D-alanylation of LTA plays an important role in modulating the properties of the cell wall in Gram-positive bacteria, influencing the net charge of the cell wall. Catalyzes D-alanylation from DltC carrier protein. The sequence is that of Teichoic acid D-alanyltransferase from Lacticaseibacillus rhamnosus (Lactobacillus rhamnosus).